Reading from the N-terminus, the 65-residue chain is MLINATKVLSSSGFTNIEITGYNWFGCSENDFQHTGFRAIGPTGQKVEGTVCSGLFFKDSTIRFK.

This is an uncharacterized protein from Escherichia coli (Bacteriophage T4).